A 548-amino-acid polypeptide reads, in one-letter code: MMATLATSPPTSPTWPKRRPRAWALRCERYCCAAATYFPLAFVYSLTTWAVYVEASIGLKPSRSPWIGLPTSILGVLLYICLNASYTVAVFTDPGSPLTTGAGRHQYSALPVSELPEYTAYTVSSTGGSRYCKKCQCPKPDRAHHCSTCKRCVLKMDHHCPWLATCVGLYNYKAFLLFLIYTSLFCWVDFAVSATWIWTEVFNDAPYLETMLPVNVVLLAILGGIIGLVLTGFTAWHISLAVRGMTTIECLEKTRYVSPLRKALDRHRYEHILGNHRDGNRASPVADSFGHRLQDYGQQILDAHANAIPGVTRAEEGEERLSPAPEQPASHGVSDDQLTPAQQALTRSYAELERQREHDRYQDYLNEEDNGKLPHAFDLGWRRNLLHLFGNRPLLWLIPVCTTTGDGWRWEPSRKFLEAQEGLRLKREQDMANQQHYYRDLYSRNMNNGRAWLGPNAAAPTWNPHQPLDSFRDPERPATGVSMRTLAPMSPRPRPGDSDFEDDISETDPLNQQSVPANGAVNQLQKANEASSATTNRREDSSEWRDWD.

The Cytoplasmic portion of the chain corresponds to 1-32 (MMATLATSPPTSPTWPKRRPRAWALRCERYCC). Residues 33 to 53 (AAATYFPLAFVYSLTTWAVYV) form a helical membrane-spanning segment. The Extracellular portion of the chain corresponds to 54–70 (EASIGLKPSRSPWIGLP). The helical transmembrane segment at 71–91 (TSILGVLLYICLNASYTVAVF) threads the bilayer. Residues 92–173 (TDPGSPLTTG…ATCVGLYNYK (82 aa)) lie on the Cytoplasmic side of the membrane. The DHHC domain occupies 130–180 (RYCKKCQCPKPDRAHHCSTCKRCVLKMDHHCPWLATCVGLYNYKAFLLFLI). Residues 174 to 194 (AFLLFLIYTSLFCWVDFAVSA) form a helical membrane-spanning segment. Residues 195–215 (TWIWTEVFNDAPYLETMLPVN) lie on the Extracellular side of the membrane. A helical membrane pass occupies residues 216 to 236 (VVLLAILGGIIGLVLTGFTAW). Over 237-548 (HISLAVRGMT…EDSSEWRDWD (312 aa)) the chain is Cytoplasmic. Disordered regions lie at residues 313-339 (RAEE…DQLT) and 463-548 (NPHQ…RDWD). The segment covering 508–535 (DPLNQQSVPANGAVNQLQKANEASSATT) has biased composition (polar residues). Positions 536 to 548 (NRREDSSEWRDWD) are enriched in basic and acidic residues.

It belongs to the DHHC palmitoyltransferase family. PFA3 subfamily. Autopalmitoylated.

It localises to the vacuole membrane. The enzyme catalyses L-cysteinyl-[protein] + hexadecanoyl-CoA = S-hexadecanoyl-L-cysteinyl-[protein] + CoA. Palmitoyltransferase specific for VAC8. Palmitoylates VAC8 at one or more of its N-terminal cysteine residues, which is required for its proper membrane localization. The sequence is that of Palmitoyltransferase pfa3 (pfa3) from Aspergillus fumigatus (strain ATCC MYA-4609 / CBS 101355 / FGSC A1100 / Af293) (Neosartorya fumigata).